A 569-amino-acid polypeptide reads, in one-letter code: Proline--tRNA ligase (569 aa).

It belongs to the class-II aminoacyl-tRNA synthetase family. ProS type 1 subfamily. In terms of assembly, homodimer.

Its subcellular location is the cytoplasm. The enzyme catalyses tRNA(Pro) + L-proline + ATP = L-prolyl-tRNA(Pro) + AMP + diphosphate. Its function is as follows. Catalyzes the attachment of proline to tRNA(Pro) in a two-step reaction: proline is first activated by ATP to form Pro-AMP and then transferred to the acceptor end of tRNA(Pro). As ProRS can inadvertently accommodate and process non-cognate amino acids such as alanine and cysteine, to avoid such errors it has two additional distinct editing activities against alanine. One activity is designated as 'pretransfer' editing and involves the tRNA(Pro)-independent hydrolysis of activated Ala-AMP. The other activity is designated 'posttransfer' editing and involves deacylation of mischarged Ala-tRNA(Pro). The misacylated Cys-tRNA(Pro) is not edited by ProRS. This chain is Proline--tRNA ligase, found in Nitratiruptor sp. (strain SB155-2).